The sequence spans 314 residues: 4-hydroxy-3-methylbut-2-enyl diphosphate reductase (314 aa).

C12 lines the [4Fe-4S] cluster pocket. (2E)-4-hydroxy-3-methylbut-2-enyl diphosphate is bound by residues H43 and H81. Dimethylallyl diphosphate contacts are provided by H43 and H81. Residues H43 and H81 each coordinate isopentenyl diphosphate. [4Fe-4S] cluster is bound at residue C103. Position 131 (H131) interacts with (2E)-4-hydroxy-3-methylbut-2-enyl diphosphate. H131 is a dimethylallyl diphosphate binding site. H131 serves as a coordination point for isopentenyl diphosphate. E133 acts as the Proton donor in catalysis. T170 lines the (2E)-4-hydroxy-3-methylbut-2-enyl diphosphate pocket. Residue C198 participates in [4Fe-4S] cluster binding. (2E)-4-hydroxy-3-methylbut-2-enyl diphosphate is bound by residues S226, N228, and S271. Positions 226, 228, and 271 each coordinate dimethylallyl diphosphate. The isopentenyl diphosphate site is built by S226, N228, and S271.

Belongs to the IspH family. Requires [4Fe-4S] cluster as cofactor.

The enzyme catalyses isopentenyl diphosphate + 2 oxidized [2Fe-2S]-[ferredoxin] + H2O = (2E)-4-hydroxy-3-methylbut-2-enyl diphosphate + 2 reduced [2Fe-2S]-[ferredoxin] + 2 H(+). It catalyses the reaction dimethylallyl diphosphate + 2 oxidized [2Fe-2S]-[ferredoxin] + H2O = (2E)-4-hydroxy-3-methylbut-2-enyl diphosphate + 2 reduced [2Fe-2S]-[ferredoxin] + 2 H(+). Its pathway is isoprenoid biosynthesis; dimethylallyl diphosphate biosynthesis; dimethylallyl diphosphate from (2E)-4-hydroxy-3-methylbutenyl diphosphate: step 1/1. It functions in the pathway isoprenoid biosynthesis; isopentenyl diphosphate biosynthesis via DXP pathway; isopentenyl diphosphate from 1-deoxy-D-xylulose 5-phosphate: step 6/6. Catalyzes the conversion of 1-hydroxy-2-methyl-2-(E)-butenyl 4-diphosphate (HMBPP) into a mixture of isopentenyl diphosphate (IPP) and dimethylallyl diphosphate (DMAPP). Acts in the terminal step of the DOXP/MEP pathway for isoprenoid precursor biosynthesis. The polypeptide is 4-hydroxy-3-methylbut-2-enyl diphosphate reductase (Halalkalibacterium halodurans (strain ATCC BAA-125 / DSM 18197 / FERM 7344 / JCM 9153 / C-125) (Bacillus halodurans)).